Reading from the N-terminus, the 322-residue chain is tRNA uridine(34) hydroxylase (322 aa).

In terms of domain architecture, Rhodanese spans Gln125–Lys219. The active-site Cysteine persulfide intermediate is the Cys179.

It belongs to the TrhO family.

The catalysed reaction is uridine(34) in tRNA + AH2 + O2 = 5-hydroxyuridine(34) in tRNA + A + H2O. Catalyzes oxygen-dependent 5-hydroxyuridine (ho5U) modification at position 34 in tRNAs. The polypeptide is tRNA uridine(34) hydroxylase (Bacillus pumilus (strain SAFR-032)).